Reading from the N-terminus, the 311-residue chain is Olfactory receptor 5L1 (311 aa).

At 1–25 the chain is on the extracellular side; sequence MGKENCTTVAEFILLGLSDVPELRV. The N-linked (GlcNAc...) asparagine glycan is linked to Asn5. Residues 26–46 traverse the membrane as a helical segment; that stretch reads CLFLLFLLIYGVTLLANLGMI. Topologically, residues 47–54 are cytoplasmic; the sequence is ALIQVSSR. Residues 55–75 traverse the membrane as a helical segment; sequence LHTPMYFFLSHLSSVDFCYSS. The Extracellular portion of the chain corresponds to 76–99; the sequence is IIVPKMLANIFNKDKAISFLGCMV. Cys97 and Cys189 are disulfide-bonded. Residues 100-120 form a helical membrane-spanning segment; that stretch reads QFYLFCTCVVTEVFLLAVMAY. Topologically, residues 121–139 are cytoplasmic; it reads DRFVAICNPLLYTVTMSWK. The chain crosses the membrane as a helical span at residues 140–160; sequence VRVELASCCYFCGTVCSLIHL. The Extracellular segment spans residues 161-196; sequence CLALRIPFYRSNVINHFFCDLPPVLSLACSDITVNE. A glycan (N-linked (GlcNAc...) asparagine) is linked at Asn195. The helical transmembrane segment at 197 to 217 threads the bilayer; that stretch reads TLLFLVATLNESVTIMIILTS. Over 218-237 the chain is Cytoplasmic; the sequence is YLLILTTILKMGSAEGRHKA. The chain crosses the membrane as a helical span at residues 238–258; the sequence is FSTCASHLTAITVFHGTVLSI. At 259-271 the chain is on the extracellular side; the sequence is YCRPSSGNSGDAD. Residues 272–292 form a helical membrane-spanning segment; sequence KVATVFYTVVIPMLNSVIYSL. At 293-311 the chain is on the cytoplasmic side; that stretch reads RNKDVKEALRKVMGSKIHS.

This sequence belongs to the G-protein coupled receptor 1 family.

It localises to the cell membrane. Functionally, odorant receptor. In Homo sapiens (Human), this protein is Olfactory receptor 5L1 (OR5L1).